Here is a 273-residue protein sequence, read N- to C-terminus: Diadenylate cyclase (273 aa).

The next 3 membrane-spanning stretches (helical) occupy residues 12–32 (LANI…IMLI), 37–57 (AVQL…SGFF), and 61–81 (TVEW…IIIF). The region spanning 82 to 242 (QPELRRALET…GGELFRDVSE (161 aa)) is the DAC domain.

This sequence belongs to the adenylate cyclase family. DacA/CdaA subfamily. As to quaternary structure, probably a homodimer.

The protein resides in the cell membrane. It carries out the reaction 2 ATP = 3',3'-c-di-AMP + 2 diphosphate. Its function is as follows. Catalyzes the condensation of 2 ATP molecules into cyclic di-AMP (c-di-AMP), a signaling compound secreted into the host's cytosol where it triggers the cytosolic surveillance pathway (CSP), a host pathway of innate immunity characterized by expression of beta interferon (IFN-beta) and coregulated genes. Overexpression increases export of c-di-AMP. c-di-AMP is a second messenger that mediates growth, cell wall stability and virulence. The polypeptide is Diadenylate cyclase (Listeria monocytogenes serotype 1/2a (strain 10403S)).